The following is a 167-amino-acid chain: MTKSSFTFFFQEYCEKHNLTNEEIQERFAILQYQAEVERDTTQDHQQLSAIFAKWRENCPRKQANNDETTSQYTGAEHQAIRDLFASLKQSAREAHSLHHQSHQSDVQVHAKGNPSRVLEAPAVTEVDKAVLAYLEAFFASDRSSSEILKLSNRLFNLGQAYNKTAK.

The disordered stretch occupies residues 95 to 114 (AHSLHHQSHQSDVQVHAKGN).

This is an uncharacterized protein from Haemophilus influenzae (Bacteriophage HP1).